We begin with the raw amino-acid sequence, 60 residues long: Cytotoxin 5 (60 aa).

Cystine bridges form between Cys3–Cys21, Cys14–Cys38, Cys42–Cys53, and Cys54–Cys59.

Belongs to the three-finger toxin family. Short-chain subfamily. Type IA cytotoxin sub-subfamily. As to quaternary structure, monomer in solution; Homodimer and oligomer in the presence of negatively charged lipids forming a pore with a size ranging between 20 and 30 Angstroms. In terms of tissue distribution, expressed by the venom gland.

Its subcellular location is the secreted. It is found in the target cell membrane. Functionally, basic protein that binds to cell membrane and depolarizes cardiomyocytes. It also possesses lytic activity on many other cells, including red blood cells. Interaction with sulfatides in the cell membrane induces pore formation and cell internalization and is responsible for cytotoxicity in cardiomyocytes. It targets the mitochondrial membrane and induces mitochondrial swelling and fragmentation. Inhibits protein kinases C. It binds to the integrin alpha-V/beta-3 with a moderate affinity. Is cardiotoxic and cytocidal to Yoshida sarcoma cells. This Naja atra (Chinese cobra) protein is Cytotoxin 5.